The sequence spans 144 residues: Nucleoside diphosphate kinase (144 aa).

6 residues coordinate ATP: K11, F59, R87, T93, R104, and N114. H117 serves as the catalytic Pros-phosphohistidine intermediate.

It belongs to the NDK family. In terms of assembly, homotetramer. Requires Mg(2+) as cofactor.

The protein localises to the cytoplasm. The enzyme catalyses a 2'-deoxyribonucleoside 5'-diphosphate + ATP = a 2'-deoxyribonucleoside 5'-triphosphate + ADP. It catalyses the reaction a ribonucleoside 5'-diphosphate + ATP = a ribonucleoside 5'-triphosphate + ADP. In terms of biological role, major role in the synthesis of nucleoside triphosphates other than ATP. The ATP gamma phosphate is transferred to the NDP beta phosphate via a ping-pong mechanism, using a phosphorylated active-site intermediate. The protein is Nucleoside diphosphate kinase of Sorangium cellulosum (strain So ce56) (Polyangium cellulosum (strain So ce56)).